Consider the following 130-residue polypeptide: YopE regulator (130 aa).

Positive regulator of YopE. The protein is YopE regulator (yerA) of Yersinia pestis.